Here is a 427-residue protein sequence, read N- to C-terminus: Glutamate-1-semialdehyde 2,1-aminomutase (427 aa).

Lysine 265 is modified (N6-(pyridoxal phosphate)lysine).

The protein belongs to the class-III pyridoxal-phosphate-dependent aminotransferase family. HemL subfamily. As to quaternary structure, homodimer. Requires pyridoxal 5'-phosphate as cofactor.

Its subcellular location is the cytoplasm. The catalysed reaction is (S)-4-amino-5-oxopentanoate = 5-aminolevulinate. Its pathway is porphyrin-containing compound metabolism; protoporphyrin-IX biosynthesis; 5-aminolevulinate from L-glutamyl-tRNA(Glu): step 2/2. In Paraburkholderia phytofirmans (strain DSM 17436 / LMG 22146 / PsJN) (Burkholderia phytofirmans), this protein is Glutamate-1-semialdehyde 2,1-aminomutase.